Here is a 364-residue protein sequence, read N- to C-terminus: Geranylgeranyl pyrophosphate synthase janG (364 aa).

Positions 83, 86, and 115 each coordinate isopentenyl diphosphate. Residues aspartate 122 and aspartate 126 each coordinate Mg(2+). Arginine 131 contacts dimethylallyl diphosphate. Residue arginine 132 participates in isopentenyl diphosphate binding. Residues lysine 209, threonine 210, and glutamine 243 each coordinate dimethylallyl diphosphate. Position 246 (aspartate 246) interacts with Mg(2+). Asparagine 250, lysine 260, and lysine 270 together coordinate dimethylallyl diphosphate.

This sequence belongs to the FPP/GGPP synthase family. Mg(2+) serves as cofactor.

The catalysed reaction is isopentenyl diphosphate + dimethylallyl diphosphate = (2E)-geranyl diphosphate + diphosphate. It catalyses the reaction isopentenyl diphosphate + (2E)-geranyl diphosphate = (2E,6E)-farnesyl diphosphate + diphosphate. The enzyme catalyses isopentenyl diphosphate + (2E,6E)-farnesyl diphosphate = (2E,6E,10E)-geranylgeranyl diphosphate + diphosphate. It participates in secondary metabolite biosynthesis. Its function is as follows. Geranylgeranyl pyrophosphate synthase; part of the gene cluster that mediates the biosynthesis of the indole diterpenes janthitremanes such as shearinine K or shearinine A. The geranylgeranyl diphosphate (GGPP) synthase janG catalyzes the first step in janthitremane biosynthesis via conversion of farnesyl pyrophosphate and isopentyl pyrophosphate into geranylgeranyl pyrophosphate (GGPP). Condensation of indole-3-glycerol phosphate with GGPP by the prenyl transferase janC then forms 3-geranylgeranylindole (3-GGI). Epoxidation by the FAD-dependent monooxygenase janM leads to a epoxidized-GGI that is substrate of the terpene cyclase janB for cyclization to yield paspaline. Paspaline is subsequently converted to 13-desoxypaspaline by the cytochrome P450 monooxygenase janP, via beta-PC-M6 in a series of alpha-face oxidations. The cytochrome P450 monooxygenase janQ is proposed to carry out sequential beta-face oxidation steps at C-7 and C-13 of 13-desoxypaspaline to form paspalicine and paspalinine respectively. The indole diterpene prenyltransferase janD may then convert paspalinine into shearinine K which is substrate of janO and/or additional enzymes for oxidation and cyclization to generate shearinine A. This Penicillium janthinellum (Penicillium vitale) protein is Geranylgeranyl pyrophosphate synthase janG.